Reading from the N-terminus, the 214-residue chain is Adenylate kinase (214 aa).

10–15 (GAGKGT) is a binding site for ATP. The segment at 30–59 (STGDMLRAAVKAGTPLGVKAQEIMIQGGLV) is NMP. AMP is bound by residues Thr31, Arg36, 57–59 (GLV), 85–88 (GFPR), and Gln92. Residues 126-163 (GRRSCSSCGKGYHLVFDPPLRAGVCDVCGSGLVQRADD) form an LID region. Position 127 (Arg127) interacts with ATP. Zn(2+) contacts are provided by Cys130, Cys133, Cys150, and Cys153. AMP is bound by residues Arg160 and Arg171. Gly199 is an ATP binding site.

The protein belongs to the adenylate kinase family. In terms of assembly, monomer.

Its subcellular location is the cytoplasm. It catalyses the reaction AMP + ATP = 2 ADP. The protein operates within purine metabolism; AMP biosynthesis via salvage pathway; AMP from ADP: step 1/1. In terms of biological role, catalyzes the reversible transfer of the terminal phosphate group between ATP and AMP. Plays an important role in cellular energy homeostasis and in adenine nucleotide metabolism. This Trichlorobacter lovleyi (strain ATCC BAA-1151 / DSM 17278 / SZ) (Geobacter lovleyi) protein is Adenylate kinase.